We begin with the raw amino-acid sequence, 466 residues long: Dihydrolipoyl dehydrogenase (466 aa).

FAD contacts are provided by residues 34 to 42 (ERVHLGGIC), K51, and G114. The cysteines at positions 42 and 47 are disulfide-linked. Residues 180-184 (GSGAI), E203, and 269-272 (AIGV) contribute to the NAD(+) site. D311 and A319 together coordinate FAD. H445 serves as the catalytic Proton acceptor.

This sequence belongs to the class-I pyridine nucleotide-disulfide oxidoreductase family. In terms of assembly, homodimer. FAD serves as cofactor.

It is found in the cytoplasm. The catalysed reaction is N(6)-[(R)-dihydrolipoyl]-L-lysyl-[protein] + NAD(+) = N(6)-[(R)-lipoyl]-L-lysyl-[protein] + NADH + H(+). Functionally, lipoamide dehydrogenase is a component of the alpha-ketoacid dehydrogenase complexes. The protein is Dihydrolipoyl dehydrogenase (lpd) of Zymomonas mobilis subsp. mobilis (strain ATCC 31821 / ZM4 / CP4).